An 89-amino-acid chain; its full sequence is Cell division topological specificity factor (89 aa).

This sequence belongs to the MinE family.

Its function is as follows. Prevents the cell division inhibition by proteins MinC and MinD at internal division sites while permitting inhibition at polar sites. This ensures cell division at the proper site by restricting the formation of a division septum at the midpoint of the long axis of the cell. The polypeptide is Cell division topological specificity factor (Clostridium beijerinckii (strain ATCC 51743 / NCIMB 8052) (Clostridium acetobutylicum)).